We begin with the raw amino-acid sequence, 94 residues long: Small ribosomal subunit protein uS19 (94 aa).

The protein belongs to the universal ribosomal protein uS19 family.

Functionally, protein S19 forms a complex with S13 that binds strongly to the 16S ribosomal RNA. The chain is Small ribosomal subunit protein uS19 from Hamiltonella defensa subsp. Acyrthosiphon pisum (strain 5AT).